The primary structure comprises 626 residues: 4-hydroxy-3-methylbut-2-en-1-yl diphosphate synthase (flavodoxin) (626 aa).

[4Fe-4S] cluster contacts are provided by Cys521, Cys524, Cys555, and Glu562.

Belongs to the IspG family. It depends on [4Fe-4S] cluster as a cofactor.

It catalyses the reaction (2E)-4-hydroxy-3-methylbut-2-enyl diphosphate + oxidized [flavodoxin] + H2O + 2 H(+) = 2-C-methyl-D-erythritol 2,4-cyclic diphosphate + reduced [flavodoxin]. It participates in isoprenoid biosynthesis; isopentenyl diphosphate biosynthesis via DXP pathway; isopentenyl diphosphate from 1-deoxy-D-xylulose 5-phosphate: step 5/6. Converts 2C-methyl-D-erythritol 2,4-cyclodiphosphate (ME-2,4cPP) into 1-hydroxy-2-methyl-2-(E)-butenyl 4-diphosphate. The sequence is that of 4-hydroxy-3-methylbut-2-en-1-yl diphosphate synthase (flavodoxin) from Bacteroides fragilis (strain ATCC 25285 / DSM 2151 / CCUG 4856 / JCM 11019 / LMG 10263 / NCTC 9343 / Onslow / VPI 2553 / EN-2).